Here is a 131-residue protein sequence, read N- to C-terminus: Small ribosomal subunit protein bS6 (131 aa).

Positions 97-131 (TEASPMVKAKDERRRDVAEDLDEEEVDDVAEDSEE) are disordered. Positions 104–114 (KAKDERRRDVA) are enriched in basic and acidic residues. Residues 115 to 131 (EDLDEEEVDDVAEDSEE) show a composition bias toward acidic residues.

Belongs to the bacterial ribosomal protein bS6 family.

In terms of biological role, binds together with bS18 to 16S ribosomal RNA. In Proteus mirabilis (strain HI4320), this protein is Small ribosomal subunit protein bS6.